The sequence spans 893 residues: MTDVTVKALAAERQVSVDRLVQQFADAGIRKSADDSVSAQEKQTLLAHLNREAGSGPDKLTLQRKTRSTLNIPGTGGKSKSVQIEVRKKRTFVKRDPQEAERLAAEEQAQREAEEQARREAEEQAKREAQQKAEREAAEQAKREAAEKAKREAAEKDKVSNQQTDDMTKTAQAEKARRENEAAELKRKAEEEARRKLEEEARRVAEEARRMAEENKWTATPEPVEDTSDYHVTTSQHARQAEDESDREVEGGRGRGRNAKAARPAKKGNKHAESKADREEARAAVRGGKGGKRKGSSLQQGFQKPVQAVNRDVVIGETITVGELANKMAVKGSQVIKAMMKLGAMATINQVIDQETAQLVAEEMGHKVILRRENELEEAVMSDRDTGAAAEPRAPVVTIMGHVDHGKTSLLDYIRSTKVASGEAGGITQHIGAYHVETDNGMITFLDTPGHAAFTSMRARGAQATDIVVLVVAADDGVMPQTIEAIQHAKAAGVPVVVAVNKIDKPEADPDRVKNELSQYGILPEEWGGESQFVHVSAKAGTGIDELLDAILLQAEVLELKAVRKGMASGAVIESFLDKGRGPVATVLVREGTLHKGDIVLCGFEYGRVRAMRNELGQEVLEAGPSIPVEILGLSGVPAAGDEVTVVRDEKKAREVALYRQGKFREVKLARQQKSKLENMFANMTEGEVHEVNIVLKADVQGSVEAISDSLLKLSTDEVKVKIIGSGVGGITETDATLAAASNAILVGFNVRADASARKVIESESLDLRYYSVIYNLIDEVKAAMSGMLSPELKQQIIGLAEVRDVFKSPKFGAIAGCMVTEGVVKRHNPIRVLRDNVVIYEGELESLRRFKDDVNEVRNGMECGIGVKNYNDVRAGDMIEVFEIIEIQRTIA.

The interval 49-303 (LNREAGSGPD…KGSSLQQGFQ (255 aa)) is disordered. A compositionally biased stretch (polar residues) spans 68 to 82 (STLNIPGTGGKSKSV). 2 stretches are compositionally biased toward basic and acidic residues: residues 93–159 (VKRD…KDKV) and 166–216 (DMTK…EENK). Basic residues predominate over residues 254-269 (GRGRNAKAARPAKKGN). Positions 270-283 (KHAESKADREEARA) are enriched in basic and acidic residues. Positions 392–561 (PRAPVVTIMG…LLQAEVLELK (170 aa)) constitute a tr-type G domain. A G1 region spans residues 401-408 (GHVDHGKT). 401 to 408 (GHVDHGKT) is a binding site for GTP. Residues 426–430 (GITQH) are G2. The tract at residues 447-450 (DTPG) is G3. GTP is bound by residues 447–451 (DTPGH) and 501–504 (NKID). The interval 501-504 (NKID) is G4. The tract at residues 537 to 539 (SAK) is G5.

The protein belongs to the TRAFAC class translation factor GTPase superfamily. Classic translation factor GTPase family. IF-2 subfamily.

The protein localises to the cytoplasm. In terms of biological role, one of the essential components for the initiation of protein synthesis. Protects formylmethionyl-tRNA from spontaneous hydrolysis and promotes its binding to the 30S ribosomal subunits. Also involved in the hydrolysis of GTP during the formation of the 70S ribosomal complex. In Salmonella arizonae (strain ATCC BAA-731 / CDC346-86 / RSK2980), this protein is Translation initiation factor IF-2.